The sequence spans 265 residues: Probable trehalose-phosphate phosphatase (265 aa).

D35 (nucleophile) is an active-site residue. Positions 35, 37, and 213 each coordinate Mg(2+). Residue 35-37 (DID) participates in substrate binding.

The protein belongs to the trehalose phosphatase family. Mg(2+) serves as cofactor.

The catalysed reaction is alpha,alpha-trehalose 6-phosphate + H2O = alpha,alpha-trehalose + phosphate. It participates in glycan biosynthesis; trehalose biosynthesis. Removes the phosphate from trehalose 6-phosphate to produce free trehalose. The sequence is that of Probable trehalose-phosphate phosphatase (otsB) from Sinorhizobium fredii (strain NBRC 101917 / NGR234).